The primary structure comprises 394 residues: Chorismate synthase (394 aa).

NADP(+)-binding residues include arginine 40 and arginine 46. FMN-binding positions include 135 to 137 (RAS) and 255 to 256 (QA). Residues 270–291 (RRRGSGAHDEIEPAGAGSRRVR) are disordered. FMN-binding positions include glycine 302, 317 to 321 (KPISS), and arginine 343.

This sequence belongs to the chorismate synthase family. As to quaternary structure, homotetramer. The cofactor is FMNH2.

It carries out the reaction 5-O-(1-carboxyvinyl)-3-phosphoshikimate = chorismate + phosphate. It functions in the pathway metabolic intermediate biosynthesis; chorismate biosynthesis; chorismate from D-erythrose 4-phosphate and phosphoenolpyruvate: step 7/7. Functionally, catalyzes the anti-1,4-elimination of the C-3 phosphate and the C-6 proR hydrogen from 5-enolpyruvylshikimate-3-phosphate (EPSP) to yield chorismate, which is the branch point compound that serves as the starting substrate for the three terminal pathways of aromatic amino acid biosynthesis. This reaction introduces a second double bond into the aromatic ring system. The protein is Chorismate synthase of Frankia casuarinae (strain DSM 45818 / CECT 9043 / HFP020203 / CcI3).